The primary structure comprises 348 residues: sn-glycerol-3-phosphate import ATP-binding protein UgpC 3 (348 aa).

The region spanning 4–234 (INIVDVKKNY…PASLFVAGFI (231 aa)) is the ABC transporter domain. 36–43 (GPSGCGKS) lines the ATP pocket.

Belongs to the ABC transporter superfamily. sn-glycerol-3-phosphate importer (TC 3.A.1.1.3) family. In terms of assembly, the complex is composed of two ATP-binding proteins (UgpC), two transmembrane proteins (UgpA and UgpE) and a solute-binding protein (UgpB).

It localises to the cell inner membrane. The enzyme catalyses sn-glycerol 3-phosphate(out) + ATP + H2O = sn-glycerol 3-phosphate(in) + ADP + phosphate + H(+). In terms of biological role, part of the ABC transporter complex UgpBAEC involved in sn-glycerol-3-phosphate (G3P) import. Responsible for energy coupling to the transport system. The chain is sn-glycerol-3-phosphate import ATP-binding protein UgpC 3 from Rhizobium etli (strain ATCC 51251 / DSM 11541 / JCM 21823 / NBRC 15573 / CFN 42).